We begin with the raw amino-acid sequence, 384 residues long: 8-amino-7-oxononanoate synthase (384 aa).

A substrate-binding site is contributed by Arg21. Position 108 to 109 (108 to 109) interacts with pyridoxal 5'-phosphate; that stretch reads GF. A substrate-binding site is contributed by His133. 3 residues coordinate pyridoxal 5'-phosphate: Ser179, His207, and Thr233. An N6-(pyridoxal phosphate)lysine modification is found at Lys236. Residue Thr352 participates in substrate binding.

It belongs to the class-II pyridoxal-phosphate-dependent aminotransferase family. BioF subfamily. In terms of assembly, homodimer. Pyridoxal 5'-phosphate serves as cofactor.

It carries out the reaction 6-carboxyhexanoyl-[ACP] + L-alanine + H(+) = (8S)-8-amino-7-oxononanoate + holo-[ACP] + CO2. It participates in cofactor biosynthesis; biotin biosynthesis. Its function is as follows. Catalyzes the decarboxylative condensation of pimeloyl-[acyl-carrier protein] and L-alanine to produce 8-amino-7-oxononanoate (AON), [acyl-carrier protein], and carbon dioxide. This Escherichia coli (strain SE11) protein is 8-amino-7-oxononanoate synthase.